Consider the following 175-residue polypeptide: Large ribosomal subunit protein uL10 (175 aa).

The protein belongs to the universal ribosomal protein uL10 family. Part of the ribosomal stalk of the 50S ribosomal subunit. The N-terminus interacts with L11 and the large rRNA to form the base of the stalk. The C-terminus forms an elongated spine to which L12 dimers bind in a sequential fashion forming a multimeric L10(L12)X complex.

Functionally, forms part of the ribosomal stalk, playing a central role in the interaction of the ribosome with GTP-bound translation factors. In Xylella fastidiosa (strain M23), this protein is Large ribosomal subunit protein uL10.